The chain runs to 479 residues: ATP synthase subunit beta (479 aa).

153-160 contacts ATP; it reads GGAGVGKT.

It belongs to the ATPase alpha/beta chains family. F-type ATPases have 2 components, CF(1) - the catalytic core - and CF(0) - the membrane proton channel. CF(1) has five subunits: alpha(3), beta(3), gamma(1), delta(1), epsilon(1). CF(0) has three main subunits: a(1), b(2) and c(9-12). The alpha and beta chains form an alternating ring which encloses part of the gamma chain. CF(1) is attached to CF(0) by a central stalk formed by the gamma and epsilon chains, while a peripheral stalk is formed by the delta and b chains.

It is found in the cell membrane. It carries out the reaction ATP + H2O + 4 H(+)(in) = ADP + phosphate + 5 H(+)(out). With respect to regulation, increases 2-fold following exposure to low pH. Functionally, produces ATP from ADP in the presence of a proton gradient across the membrane. The catalytic sites are hosted primarily by the beta subunits. This is ATP synthase subunit beta from Lactobacillus acidophilus (strain ATCC 700396 / NCK56 / N2 / NCFM).